Reading from the N-terminus, the 440-residue chain is Ribosomal protein uS12 methylthiotransferase RimO (440 aa).

One can recognise an MTTase N-terminal domain in the interval 8-124 (TSVFLLSLGC…VLDALGARYH (117 aa)). [4Fe-4S] cluster is bound by residues cysteine 17, cysteine 53, cysteine 87, cysteine 148, cysteine 152, and cysteine 155. The Radical SAM core domain maps to 134-363 (LTPPHSSYLK…MELQEEIARK (230 aa)). The TRAM domain occupies 366 to 437 (EAFVGSLMTV…AYELHGTVES (72 aa)).

This sequence belongs to the methylthiotransferase family. RimO subfamily. [4Fe-4S] cluster serves as cofactor.

The protein localises to the cytoplasm. The enzyme catalyses L-aspartate(89)-[ribosomal protein uS12]-hydrogen + (sulfur carrier)-SH + AH2 + 2 S-adenosyl-L-methionine = 3-methylsulfanyl-L-aspartate(89)-[ribosomal protein uS12]-hydrogen + (sulfur carrier)-H + 5'-deoxyadenosine + L-methionine + A + S-adenosyl-L-homocysteine + 2 H(+). Functionally, catalyzes the methylthiolation of an aspartic acid residue of ribosomal protein uS12. This Chlorobium luteolum (strain DSM 273 / BCRC 81028 / 2530) (Pelodictyon luteolum) protein is Ribosomal protein uS12 methylthiotransferase RimO.